The primary structure comprises 261 residues: Carnitinyl-CoA dehydratase (261 aa).

Glu-111 serves as the catalytic Nucleophile. The active-site Proton acceptor is the Glu-131.

It belongs to the enoyl-CoA hydratase/isomerase family.

The enzyme catalyses (R)-carnitinyl-CoA = crotonobetainyl-CoA + H2O. It functions in the pathway amine and polyamine metabolism; carnitine metabolism. Its function is as follows. Catalyzes the reversible dehydration of L-carnitinyl-CoA to crotonobetainyl-CoA. This Escherichia coli O6:K15:H31 (strain 536 / UPEC) protein is Carnitinyl-CoA dehydratase.